Reading from the N-terminus, the 581-residue chain is Netrin-3 (581 aa).

The first 15 residues, 1-15, serve as a signal peptide directing secretion; that stretch reads LRLLLTTSVLRLARA. A Laminin N-terminal domain is found at 35–261; that stretch reads APRRCIPEFV…SVGELQVGGR (227 aa). Asn-88 and Asn-103 each carry an N-linked (GlcNAc...) asparagine glycan. Cystine bridges form between Cys-91/Cys-124, Cys-262/Cys-271, Cys-264/Cys-281, Cys-283/Cys-292, Cys-295/Cys-315, Cys-318/Cys-327, Cys-320/Cys-345, Cys-348/Cys-357, Cys-360/Cys-378, Cys-381/Cys-393, Cys-383/Cys-400, Cys-402/Cys-411, Cys-414/Cys-428, Cys-449/Cys-521, and Cys-468/Cys-578. Laminin EGF-like domains follow at residues 262-317, 318-380, and 381-430; these read CKCN…ECLA, CNCN…ACKA, and CDCH…PCIK. N-linked (GlcNAc...) asparagine glycosylation occurs at Asn-394. An NTR domain is found at 449–578; it reads CDSYCKPAKG…LQRREKKGKC (130 aa). The short motif at 507-509 is the Cell attachment site element; sequence RGD. N-linked (GlcNAc...) asparagine glycosylation is present at Asn-540.

It is found in the secreted. It localises to the extracellular space. The protein localises to the extracellular matrix. Its function is as follows. Netrins control guidance of CNS commissural axons and peripheral motor axons. The chain is Netrin-3 (NTN3) from Gallus gallus (Chicken).